The chain runs to 300 residues: Ribosomal protein L11 methyltransferase (300 aa).

Thr152, Gly173, Asp195, and Asn234 together coordinate S-adenosyl-L-methionine.

It belongs to the methyltransferase superfamily. PrmA family.

Its subcellular location is the cytoplasm. The enzyme catalyses L-lysyl-[protein] + 3 S-adenosyl-L-methionine = N(6),N(6),N(6)-trimethyl-L-lysyl-[protein] + 3 S-adenosyl-L-homocysteine + 3 H(+). Functionally, methylates ribosomal protein L11. The polypeptide is Ribosomal protein L11 methyltransferase (Burkholderia thailandensis (strain ATCC 700388 / DSM 13276 / CCUG 48851 / CIP 106301 / E264)).